Reading from the N-terminus, the 307-residue chain is UDP-3-O-acyl-N-acetylglucosamine deacetylase (307 aa).

Residues His80, His239, and Asp243 each coordinate Zn(2+). His266 serves as the catalytic Proton donor.

The protein belongs to the LpxC family. Zn(2+) serves as cofactor.

It catalyses the reaction a UDP-3-O-[(3R)-3-hydroxyacyl]-N-acetyl-alpha-D-glucosamine + H2O = a UDP-3-O-[(3R)-3-hydroxyacyl]-alpha-D-glucosamine + acetate. It participates in glycolipid biosynthesis; lipid IV(A) biosynthesis; lipid IV(A) from (3R)-3-hydroxytetradecanoyl-[acyl-carrier-protein] and UDP-N-acetyl-alpha-D-glucosamine: step 2/6. Functionally, catalyzes the hydrolysis of UDP-3-O-myristoyl-N-acetylglucosamine to form UDP-3-O-myristoylglucosamine and acetate, the committed step in lipid A biosynthesis. The chain is UDP-3-O-acyl-N-acetylglucosamine deacetylase from Neisseria gonorrhoeae (strain ATCC 700825 / FA 1090).